We begin with the raw amino-acid sequence, 426 residues long: 3-phosphoshikimate 1-carboxyvinyltransferase (426 aa).

Positions 22, 23, and 27 each coordinate 3-phosphoshikimate. Lys-22 contributes to the phosphoenolpyruvate binding site. Residues Gly-96 and Arg-124 each coordinate phosphoenolpyruvate. 3-phosphoshikimate contacts are provided by Ser-170, Ser-171, Gln-172, Ser-198, Asp-314, Asn-337, and Lys-341. Gln-172 is a phosphoenolpyruvate binding site. Asp-314 serves as the catalytic Proton acceptor. Phosphoenolpyruvate is bound by residues Arg-345, Arg-387, and Lys-412.

Belongs to the EPSP synthase family. As to quaternary structure, monomer.

The protein localises to the cytoplasm. It catalyses the reaction 3-phosphoshikimate + phosphoenolpyruvate = 5-O-(1-carboxyvinyl)-3-phosphoshikimate + phosphate. Its pathway is metabolic intermediate biosynthesis; chorismate biosynthesis; chorismate from D-erythrose 4-phosphate and phosphoenolpyruvate: step 6/7. Catalyzes the transfer of the enolpyruvyl moiety of phosphoenolpyruvate (PEP) to the 5-hydroxyl of shikimate-3-phosphate (S3P) to produce enolpyruvyl shikimate-3-phosphate and inorganic phosphate. The polypeptide is 3-phosphoshikimate 1-carboxyvinyltransferase (Aliivibrio fischeri (strain MJ11) (Vibrio fischeri)).